The primary structure comprises 379 residues: Mannitol-1-phosphate 5-dehydrogenase (379 aa).

Ala3–Gly14 contributes to the NAD(+) binding site.

It belongs to the mannitol dehydrogenase family.

It catalyses the reaction D-mannitol 1-phosphate + NAD(+) = beta-D-fructose 6-phosphate + NADH + H(+). This Actinobacillus pleuropneumoniae serotype 5b (strain L20) protein is Mannitol-1-phosphate 5-dehydrogenase.